A 239-amino-acid chain; its full sequence is Carboxy-S-adenosyl-L-methionine synthase (239 aa).

S-adenosyl-L-methionine is bound by residues Tyr35, 64 to 66 (GCS), 88 to 89 (DN), and Arg195.

The protein belongs to the class I-like SAM-binding methyltransferase superfamily. Cx-SAM synthase family. In terms of assembly, homodimer.

The catalysed reaction is prephenate + S-adenosyl-L-methionine = carboxy-S-adenosyl-L-methionine + 3-phenylpyruvate + H2O. Its function is as follows. Catalyzes the conversion of S-adenosyl-L-methionine (SAM) to carboxy-S-adenosyl-L-methionine (Cx-SAM). In Helicobacter pylori (strain Shi470), this protein is Carboxy-S-adenosyl-L-methionine synthase.